Here is a 355-residue protein sequence, read N- to C-terminus: Phenylalanine--tRNA ligase alpha subunit (355 aa).

Mg(2+) is bound at residue E273.

Belongs to the class-II aminoacyl-tRNA synthetase family. Phe-tRNA synthetase alpha subunit type 1 subfamily. As to quaternary structure, tetramer of two alpha and two beta subunits. Mg(2+) serves as cofactor.

The protein resides in the cytoplasm. It catalyses the reaction tRNA(Phe) + L-phenylalanine + ATP = L-phenylalanyl-tRNA(Phe) + AMP + diphosphate + H(+). The polypeptide is Phenylalanine--tRNA ligase alpha subunit (Bifidobacterium animalis subsp. lactis (strain AD011)).